We begin with the raw amino-acid sequence, 138 residues long: MNIIDRFEQENISKRTANKKIPDFEAGDTVKVTVKIIDRSIEKDGKEKLTERFQAYEGVVIAKRNRGITSSFLVRKISHGEGVERRFMTYSPIVHSIDVVKYGVVCRAKLYYLRNRSGKSARIKERHIPIAKTKAAKA.

The protein belongs to the bacterial ribosomal protein bL19 family.

Functionally, this protein is located at the 30S-50S ribosomal subunit interface and may play a role in the structure and function of the aminoacyl-tRNA binding site. This chain is Large ribosomal subunit protein bL19, found in Rickettsia africae (strain ESF-5).